The primary structure comprises 521 residues: C-22 sterol desaturase erg5 (521 aa).

The helical transmembrane segment at A30 to I50 threads the bilayer.

This sequence belongs to the cytochrome P450 family. It depends on heme as a cofactor.

It localises to the endoplasmic reticulum membrane. The catalysed reaction is 5-dehydroepisterol + NADPH + O2 + H(+) = ergosta-5,7,22,24(28)-tetraen-3beta-ol + NADP(+) + 2 H2O. It participates in steroid metabolism; ergosterol biosynthesis. In terms of biological role, C-22 sterol desaturase; part of the third module of ergosterol biosynthesis pathway that includes the late steps of the pathway. Erg5 converts 5-dehydroepisterol into ergosta-5,7,22,24(28)-tetraen-3beta-ol by forming the C-22(23) double bond in the sterol side chain. The third module or late pathway involves the ergosterol synthesis itself through consecutive reactions that mainly occur in the endoplasmic reticulum (ER) membrane. Firstly, the squalene synthase erg9 catalyzes the condensation of 2 farnesyl pyrophosphate moieties to form squalene, which is the precursor of all steroids. Squalene synthase is crucial for balancing the incorporation of farnesyl diphosphate (FPP) into sterol and nonsterol isoprene synthesis. Secondly, squalene is converted into lanosterol by the consecutive action of the squalene epoxidase erg1 and the lanosterol synthase erg7. Then, the delta(24)-sterol C-methyltransferase erg6 methylates lanosterol at C-24 to produce eburicol. Eburicol is the substrate of the sterol 14-alpha demethylase encoded by cyp51A and cyp51B, to yield 4,4,24-trimethyl ergosta-8,14,24(28)-trienol. The C-14 reductase erg24 then reduces the C14=C15 double bond which leads to 4,4-dimethylfecosterol. A sequence of further demethylations at C-4, involving the C-4 demethylation complex containing the C-4 methylsterol oxidases erg25A or erg25B, the sterol-4-alpha-carboxylate 3-dehydrogenase erg26 and the 3-keto-steroid reductase erg27, leads to the production of fecosterol via 4-methylfecosterol. The C-8 sterol isomerase erg2 then catalyzes the reaction which results in unsaturation at C-7 in the B ring of sterols and thus converts fecosterol to episterol. The sterol-C5-desaturase erg3B then catalyzes the introduction of a C-5 double bond in the B ring to produce 5-dehydroepisterol. The 2 other sterol-C5-desaturases, erg3A and erg3C, seem to be less important in ergosterol biosynthesis. The C-22 sterol desaturase erg5 further converts 5-dehydroepisterol into ergosta-5,7,22,24(28)-tetraen-3beta-ol by forming the C-22(23) double bond in the sterol side chain. Finally, ergosta-5,7,22,24(28)-tetraen-3beta-ol is substrate of the C-24(28) sterol reductases erg4A and erg4B to produce ergosterol. Possible alternative sterol biosynthetic pathways might exist from fecosterol to ergosterol, depending on the activities of the erg3 isoforms. The polypeptide is C-22 sterol desaturase erg5 (Aspergillus fumigatus (strain ATCC MYA-4609 / CBS 101355 / FGSC A1100 / Af293) (Neosartorya fumigata)).